A 361-amino-acid chain; its full sequence is Peptide chain release factor 1 (361 aa).

An N5-methylglutamine modification is found at Q235. Residues 288-307 (AARSADRKDQVGSGDRSERI) form a disordered region.

The protein belongs to the prokaryotic/mitochondrial release factor family. Post-translationally, methylated by PrmC. Methylation increases the termination efficiency of RF1.

It localises to the cytoplasm. In terms of biological role, peptide chain release factor 1 directs the termination of translation in response to the peptide chain termination codons UAG and UAA. In Nitrobacter hamburgensis (strain DSM 10229 / NCIMB 13809 / X14), this protein is Peptide chain release factor 1.